Consider the following 239-residue polypeptide: Ribonuclease HII (239 aa).

Residues 18–231 (KIIVGLDEAG…SKNLLKEIEE (214 aa)) form the RNase H type-2 domain. The a divalent metal cation site is built by Asp-24, Glu-25, and Asp-125.

This sequence belongs to the RNase HII family. Mn(2+) serves as cofactor. It depends on Mg(2+) as a cofactor.

The protein resides in the cytoplasm. It catalyses the reaction Endonucleolytic cleavage to 5'-phosphomonoester.. Its function is as follows. Endonuclease that specifically degrades the RNA of RNA-DNA hybrids. This Methanococcus maripaludis (strain C5 / ATCC BAA-1333) protein is Ribonuclease HII.